The following is a 434-amino-acid chain: Quinolone resistance transporter (434 aa).

Transmembrane regions (helical) follow at residues 15–35 (LIPA…AVGF), 45–65 (GIGD…YFLF), 85–105 (ILLT…PKSF), 110–130 (FLLG…ITQW), 142–162 (MFVL…GLLL), 175–195 (WLFV…FLWL), 241–261 (VLLL…LNLW), 275–295 (IQIG…LLII), 306–326 (YGHL…SGWL), 333–353 (LAAL…FWTL), 367–387 (IALI…GIGL), and 396–416 (AAGL…TYIV).

The protein belongs to the major facilitator superfamily.

The protein resides in the cell inner membrane. In terms of biological role, efflux pump that mediates resistance to quinolone-type antibiotics. The sequence is that of Quinolone resistance transporter from Acinetobacter baumannii.